The following is a 510-amino-acid chain: tRNA-2-methylthio-N(6)-dimethylallyladenosine synthase (510 aa).

Residues 19 to 135 (RTFEVRTYGC…LPALLDRARH (117 aa)) enclose the MTTase N-terminal domain. Residues C28, C64, C98, C172, C176, and C179 each contribute to the [4Fe-4S] cluster site. Positions 158-394 (RESSYAAWVS…IELQERISLE (237 aa)) constitute a Radical SAM core domain. The TRAM domain occupies 397–467 (TAQIGRRVEL…PHHLIADAGL (71 aa)). A disordered region spans residues 477-510 (DAHAAGQKPRTGVGLGMPAVGAPDPLPATTGCAR).

The protein belongs to the methylthiotransferase family. MiaB subfamily. As to quaternary structure, monomer. The cofactor is [4Fe-4S] cluster.

The protein resides in the cytoplasm. It carries out the reaction N(6)-dimethylallyladenosine(37) in tRNA + (sulfur carrier)-SH + AH2 + 2 S-adenosyl-L-methionine = 2-methylsulfanyl-N(6)-dimethylallyladenosine(37) in tRNA + (sulfur carrier)-H + 5'-deoxyadenosine + L-methionine + A + S-adenosyl-L-homocysteine + 2 H(+). Catalyzes the methylthiolation of N6-(dimethylallyl)adenosine (i(6)A), leading to the formation of 2-methylthio-N6-(dimethylallyl)adenosine (ms(2)i(6)A) at position 37 in tRNAs that read codons beginning with uridine. This is tRNA-2-methylthio-N(6)-dimethylallyladenosine synthase from Mycolicibacterium vanbaalenii (strain DSM 7251 / JCM 13017 / BCRC 16820 / KCTC 9966 / NRRL B-24157 / PYR-1) (Mycobacterium vanbaalenii).